Here is a 78-residue protein sequence, read N- to C-terminus: Large ribosomal subunit protein bL28 (78 aa).

Belongs to the bacterial ribosomal protein bL28 family.

The protein is Large ribosomal subunit protein bL28 of Prochlorococcus marinus (strain SARG / CCMP1375 / SS120).